Consider the following 367-residue polypeptide: 4-hydroxyphenylpyruvate dioxygenase (367 aa).

VOC domains lie at 3 to 135 and 166 to 324; these read GFDH…FVDR and LIDH…IFTN. Positions 169, 252, and 335 each coordinate Fe cation.

This sequence belongs to the 4HPPD family. Fe cation is required as a cofactor.

It catalyses the reaction 3-(4-hydroxyphenyl)pyruvate + O2 = homogentisate + CO2. It functions in the pathway amino-acid degradation; L-phenylalanine degradation; acetoacetate and fumarate from L-phenylalanine: step 3/6. In terms of biological role, key enzyme in the degradation of tyrosine. The sequence is that of 4-hydroxyphenylpyruvate dioxygenase (hpd) from Dictyostelium discoideum (Social amoeba).